Here is a 135-residue protein sequence, read N- to C-terminus: C-type lectin LmsL (135 aa).

Disulfide bonds link Cys3/Cys14, Cys31/Cys131, Cys38/Cys133, and Cys106/Cys123. Residues 10–132 (MNGLCYKIFD…CESKNAFLCQ (123 aa)) form the C-type lectin domain. 5 residues coordinate Ca(2+): Gln96, Asp98, Glu104, Asn119, and Asp120. Residues 96-98 (QPD) carry the Galactose-binding motif.

This sequence belongs to the true venom lectin family. In terms of assembly, homodimer; disulfide-linked. Expressed by the venom gland.

The protein localises to the secreted. Its function is as follows. Galactose-binding protein which recognizes specific carbohydrate structures and agglutinates a variety of animal cells by binding to cell-surface glycoproteins and glycolipids. Is a calcium-dependent lectin. Shows high hemagglutinating activity, that is inhibited by lactose, galactose and inositol. The protein is C-type lectin LmsL of Lachesis stenophrys (Central American bushmaster).